A 217-amino-acid chain; its full sequence is MAHSIWHEKIKSFLPEHYYGRINHFLDEAYASGLVYPQRENVFKALQVTPLEETKVLILGQDPYHGPKQAQGLSFSVPEEISAPPSLINILKELADDIGPRDHHDLSTWASQGVLLLNACLTVPAGQANGHAGLIWEPFTDAVIKVLNEKDSPVVFILWGAYARKKKAFITNPKHHIIESPHPSPLSSYRGFFGSKPFSRTNAILEKEGMIGIDWLQ.

Aspartate 62 (proton acceptor) is an active-site residue.

It belongs to the uracil-DNA glycosylase (UDG) superfamily. UNG family.

Its subcellular location is the cytoplasm. The enzyme catalyses Hydrolyzes single-stranded DNA or mismatched double-stranded DNA and polynucleotides, releasing free uracil.. Its function is as follows. Excises uracil residues from the DNA which can arise as a result of misincorporation of dUMP residues by DNA polymerase or due to deamination of cytosine. This chain is Uracil-DNA glycosylase, found in Streptococcus pyogenes serotype M18 (strain MGAS8232).